The sequence spans 763 residues: Thyrotropin receptor (763 aa).

Residues 1 to 21 form the signal peptide; it reads MRPTPLLRLALFLVLPSSLGG. Over 22-412 the chain is Extracellular; that stretch reads ERCPSPPCEC…EFNPCEDIMG (391 aa). A disulfide bond links Cys31 and Cys41. The stretch at 51–74 is one LRR 1 repeat; the sequence is PPSTQTLKFIETHLKTIPSRAFSN. N-linked (GlcNAc...) asparagine glycosylation is found at Asn77 and Asn99. 5 LRR repeats span residues 125 to 150, 151 to 174, 176 to 199, 201 to 223, and 225 to 248; these read LPLL…IYST, DVFF…AFQG, CNET…AFNG, KLDA…AFAG, and YSGP…GLEH. Asn177 and Asn198 each carry an N-linked (GlcNAc...) asparagine glycan. Asn302 carries N-linked (GlcNAc...) asparagine glycosylation. Tyr384 is modified (sulfotyrosine). The chain crosses the membrane as a helical span at residues 413–440; the sequence is YKFLRIVVWFVSLLALLGNVFVLVILLT. Residues 441–449 lie on the Cytoplasmic side of the membrane; it reads SHYKLTVPR. Residues 450 to 472 traverse the membrane as a helical segment; sequence FLMCNLAFADFCMGLYLLLIASV. Residues 473-493 lie on the Extracellular side of the membrane; it reads DLYTQSEYYNHAIDWQTGPGC. The cysteines at positions 493 and 568 are disulfide-linked. A helical transmembrane segment spans residues 494 to 516; sequence NTAGFFTVFASELSVYTLTVITL. Residues 517 to 536 are Cytoplasmic-facing; the sequence is ERWHAITFAMRLDRKIRLWH. The helical transmembrane segment at 537–559 threads the bilayer; it reads AYVIMLGGWVCCFLLALLPLVGI. The Extracellular portion of the chain corresponds to 560 to 579; it reads SSYAKVSICLPMDTETPLAL. A helical transmembrane segment spans residues 580–601; that stretch reads AYIILVLLLNIIAFIIVCACYV. The Cytoplasmic portion of the chain corresponds to 602–624; the sequence is KIYITVRNPHYNPGDKDTRIAKR. A helical membrane pass occupies residues 625–648; the sequence is MAVLIFTDFMCMAPISFYALSALM. Topologically, residues 649–659 are extracellular; the sequence is NKPLITVTNSK. A helical membrane pass occupies residues 660 to 681; the sequence is ILLVLFYPLNSCANPFLYAIFT. Residues 682–763 are Cytoplasmic-facing; sequence KAFQRDVFML…TSKEYKRTVL (82 aa). Residues 742-763 form a disordered region; that stretch reads ENSHLTPKQQDQTSKEYKRTVL. The segment covering 744–753 has biased composition (polar residues); the sequence is SHLTPKQQDQ. The segment covering 754 to 763 has biased composition (basic and acidic residues); sequence TSKEYKRTVL. The PDZ-binding motif lies at 761–763; it reads TVL.

It belongs to the G-protein coupled receptor 1 family. FSH/LSH/TSH subfamily. In terms of assembly, interacts with heterodimer GPHA2:GPHB5; this interaction stimulates cAMP production. Interacts (via the PDZ-binding motif) with SCRIB; regulates TSHR trafficking and function. In terms of processing, glycosylated. Post-translationally, sulfated. Sulfation on Tyr-384 plays a role in thyrotropin receptor binding and activation.

It is found in the cell membrane. The protein localises to the basolateral cell membrane. In terms of biological role, receptor for the thyroid-stimulating hormone (TSH) or thyrotropin. Also acts as a receptor for the heterodimeric glycoprotein hormone (GPHA2:GPHB5) or thyrostimulin. The activity of this receptor is mediated by G proteins which activate adenylate cyclase. Plays a central role in controlling thyroid cell metabolism. The polypeptide is Thyrotropin receptor (TSHR) (Bos taurus (Bovine)).